Reading from the N-terminus, the 879-residue chain is Band 4.1-like protein 1 (879 aa).

Residues 1–64 form a disordered region; the sequence is MTTETGPDSE…RPAEQSLDME (64 aa). The segment covering 17-35 has biased composition (low complexity); that stretch reads ETPQQPEAAAAVTTPVTPA. Threonine 30 is subject to Phosphothreonine. Residues 38-50 show a composition bias toward basic and acidic residues; the sequence is SHPETNSNEKHLT. The residue at position 75 (serine 75) is a Phosphoserine. Threonine 79 bears the Phosphothreonine mark. Residues 97 to 378 form the FERM domain; the sequence is ATCRVTLLDA…EHHTFFRLVS (282 aa). Residue tyrosine 343 is modified to Phosphotyrosine. Serine 378, serine 430, serine 437, serine 461, and serine 466 each carry phosphoserine. The interval 428–501 is disordered; sequence SRSLDGAEFS…HKQEFLDKPE (74 aa). The segment covering 444-501 has biased composition (basic and acidic residues); it reads ENHDAGPDGDKREDDAESGGRRSEAEEGEVRTPTKIKELKPEQETTPRHKQEFLDKPE. The residue at position 475 (threonine 475) is a Phosphothreonine. Residues 483–541 are spectrin--actin-binding; that stretch reads KPEQETTPRHKQEFLDKPEDVLLKHQASINELKRTLKEPNSKLIHRDRDWERERRLPSS. Position 510 is a phosphoserine (serine 510). Positions 514–538 are enriched in basic and acidic residues; the sequence is LKRTLKEPNSKLIHRDRDWERERRL. Disordered regions lie at residues 514 to 596, 633 to 687, and 718 to 742; these read LKRT…FLKD, FEDF…STPE, and SRVS…MTTP. Phosphoserine occurs at positions 540, 541, 544, and 546. Threonine 550 is subject to Phosphothreonine. Over residues 550–577 the composition is skewed to basic and acidic residues; the sequence is TPEKASERAGLREGSEEKVKPPRPRAPE. Serine 564 and serine 578 each carry phosphoserine. Threonine 580 carries the post-translational modification Phosphothreonine. A phosphoserine mark is found at glutamate 583, glutamine 587, serine 639, serine 648, serine 650, serine 665, serine 666, aspartate 669, serine 671, serine 677, and serine 684. The segment covering 635–650 has biased composition (basic and acidic residues); it reads DFSRSLPELDRDKSDS. The residue at position 685 (threonine 685) is a Phosphothreonine. Residues 718 to 728 are compositionally biased toward polar residues; that stretch reads SRVSTADSTQV. Residues serine 721, proline 742, alanine 766, serine 782, and serine 868 each carry the phosphoserine modification. Residues 744-879 are C-terminal (CTD); that stretch reads CITTETISTT…EERDKKPQES (136 aa).

As to quaternary structure, interacts with AGAP2. Highest expression in brain, lower in heart and kidney. Within the brain, highest expression in cerebellum.

It localises to the cytoplasm. The protein localises to the cytoskeleton. In terms of biological role, may function to confer stability and plasticity to neuronal membrane via multiple interactions, including the spectrin-actin-based cytoskeleton, integral membrane channels and membrane-associated guanylate kinases. This chain is Band 4.1-like protein 1, found in Rattus norvegicus (Rat).